We begin with the raw amino-acid sequence, 296 residues long: Light-independent protochlorophyllide reductase iron-sulfur ATP-binding protein (296 aa).

Residues 10 to 15 and Lys39 each bind ATP; that span reads GIGKST. Ser14 provides a ligand contact to Mg(2+). Positions 95 and 129 each coordinate [4Fe-4S] cluster. 180–181 contacts ATP; the sequence is NR.

It belongs to the NifH/BchL/ChlL family. Homodimer. Protochlorophyllide reductase is composed of three subunits; ChlL, ChlN and ChlB. Requires [4Fe-4S] cluster as cofactor.

The protein localises to the plastid. It localises to the chloroplast. It catalyses the reaction chlorophyllide a + oxidized 2[4Fe-4S]-[ferredoxin] + 2 ADP + 2 phosphate = protochlorophyllide a + reduced 2[4Fe-4S]-[ferredoxin] + 2 ATP + 2 H2O. Its pathway is porphyrin-containing compound metabolism; chlorophyll biosynthesis (light-independent). Component of the dark-operative protochlorophyllide reductase (DPOR) that uses Mg-ATP and reduced ferredoxin to reduce ring D of protochlorophyllide (Pchlide) to form chlorophyllide a (Chlide). This reaction is light-independent. The L component serves as a unique electron donor to the NB-component of the complex, and binds Mg-ATP. The sequence is that of Light-independent protochlorophyllide reductase iron-sulfur ATP-binding protein from Chlorokybus atmophyticus (Soil alga).